Consider the following 72-residue polypeptide: Translation initiation factor IF-1 (72 aa).

Positions 1-72 (MSKDDVIEMQ…TRGRITWRAK (72 aa)) constitute an S1-like domain.

This sequence belongs to the IF-1 family. As to quaternary structure, component of the 30S ribosomal translation pre-initiation complex which assembles on the 30S ribosome in the order IF-2 and IF-3, IF-1 and N-formylmethionyl-tRNA(fMet); mRNA recruitment can occur at any time during PIC assembly.

The protein localises to the cytoplasm. One of the essential components for the initiation of protein synthesis. Stabilizes the binding of IF-2 and IF-3 on the 30S subunit to which N-formylmethionyl-tRNA(fMet) subsequently binds. Helps modulate mRNA selection, yielding the 30S pre-initiation complex (PIC). Upon addition of the 50S ribosomal subunit IF-1, IF-2 and IF-3 are released leaving the mature 70S translation initiation complex. In Clostridium kluyveri (strain ATCC 8527 / DSM 555 / NBRC 12016 / NCIMB 10680 / K1), this protein is Translation initiation factor IF-1.